A 704-amino-acid chain; its full sequence is Elongation factor G (704 aa).

The tr-type G domain maps to 8-290 (ARYRNIGISA…AVIEYLPAPT (283 aa)). Residues 17-24 (AHIDAGKT), 88-92 (DTPGH), and 142-145 (NKMD) each bind GTP.

The protein belongs to the TRAFAC class translation factor GTPase superfamily. Classic translation factor GTPase family. EF-G/EF-2 subfamily.

The protein resides in the cytoplasm. In terms of biological role, catalyzes the GTP-dependent ribosomal translocation step during translation elongation. During this step, the ribosome changes from the pre-translocational (PRE) to the post-translocational (POST) state as the newly formed A-site-bound peptidyl-tRNA and P-site-bound deacylated tRNA move to the P and E sites, respectively. Catalyzes the coordinated movement of the two tRNA molecules, the mRNA and conformational changes in the ribosome. The polypeptide is Elongation factor G (Proteus mirabilis (strain HI4320)).